Here is a 340-residue protein sequence, read N- to C-terminus: Ketol-acid reductoisomerase (NADP(+)) (340 aa).

One can recognise a KARI N-terminal Rossmann domain in the interval 3–182 (VQMEYEKDVK…GAARVGLLET (180 aa)). Residues 26-29 (YGSQ), Arg-49, Ser-53, and 83-86 (DEIQ) each bind NADP(+). Residue His-108 is part of the active site. Position 134 (Gly-134) interacts with NADP(+). A KARI C-terminal knotted domain is found at 183–328 (TYKEETEEDL…AELRKAMPFV (146 aa)). 4 residues coordinate Mg(2+): Asp-191, Glu-195, Glu-227, and Glu-231. Ser-252 lines the substrate pocket.

The protein belongs to the ketol-acid reductoisomerase family. The cofactor is Mg(2+).

The catalysed reaction is (2R)-2,3-dihydroxy-3-methylbutanoate + NADP(+) = (2S)-2-acetolactate + NADPH + H(+). The enzyme catalyses (2R,3R)-2,3-dihydroxy-3-methylpentanoate + NADP(+) = (S)-2-ethyl-2-hydroxy-3-oxobutanoate + NADPH + H(+). The protein operates within amino-acid biosynthesis; L-isoleucine biosynthesis; L-isoleucine from 2-oxobutanoate: step 2/4. It participates in amino-acid biosynthesis; L-valine biosynthesis; L-valine from pyruvate: step 2/4. Its function is as follows. Involved in the biosynthesis of branched-chain amino acids (BCAA). Catalyzes an alkyl-migration followed by a ketol-acid reduction of (S)-2-acetolactate (S2AL) to yield (R)-2,3-dihydroxy-isovalerate. In the isomerase reaction, S2AL is rearranged via a Mg-dependent methyl migration to produce 3-hydroxy-3-methyl-2-ketobutyrate (HMKB). In the reductase reaction, this 2-ketoacid undergoes a metal-dependent reduction by NADPH to yield (R)-2,3-dihydroxy-isovalerate. The protein is Ketol-acid reductoisomerase (NADP(+)) of Streptococcus pneumoniae (strain CGSP14).